The chain runs to 185 residues: Ribosome-recycling factor (185 aa).

Belongs to the RRF family.

Its subcellular location is the cytoplasm. Responsible for the release of ribosomes from messenger RNA at the termination of protein biosynthesis. May increase the efficiency of translation by recycling ribosomes from one round of translation to another. The chain is Ribosome-recycling factor from Salmonella arizonae (strain ATCC BAA-731 / CDC346-86 / RSK2980).